The following is a 152-amino-acid chain: Cytochrome c-type biogenesis protein CcmE 2 (152 aa).

Residues 1–8 lie on the Cytoplasmic side of the membrane; the sequence is MNPQRRRR. A helical; Signal-anchor for type II membrane protein membrane pass occupies residues 9-29; sequence LWLVLALVLAGGLATTLVAMA. Over 30-152 the chain is Periplasmic; the sequence is LQRNVAYLYT…HQVAPAKVTQ (123 aa). Residues His-123 and Tyr-127 each contribute to the heme site.

It belongs to the CcmE/CycJ family.

It localises to the cell inner membrane. Its function is as follows. Heme chaperone required for the biogenesis of c-type cytochromes. Transiently binds heme delivered by CcmC and transfers the heme to apo-cytochromes in a process facilitated by CcmF and CcmH. This chain is Cytochrome c-type biogenesis protein CcmE 2, found in Xanthomonas campestris pv. campestris (strain 8004).